Consider the following 843-residue polypeptide: Protein P (843 aa).

The tract at residues Met-1–Gln-177 is terminal protein domain (TP). Positions Glu-178–Leu-346 are spacer. Disordered regions lie at residues Gln-180–Ser-221 and Arg-282–Arg-313. Residues Ser-196 to Ser-221 show a composition bias toward polar residues. The polymerase/reverse transcriptase domain (RT) stretch occupies residues Glu-347 to Gln-690. In terms of domain architecture, Reverse transcriptase spans Gln-357 to Ile-600. Residues Asp-429, Asp-551, and Asp-552 each coordinate Mg(2+).

Belongs to the hepadnaviridae P protein family.

The enzyme catalyses DNA(n) + a 2'-deoxyribonucleoside 5'-triphosphate = DNA(n+1) + diphosphate. The catalysed reaction is Endonucleolytic cleavage to 5'-phosphomonoester.. With respect to regulation, activated by host HSP70 and HSP40 in vitro to be able to bind the epsilon loop of the pgRNA. Because deletion of the RNase H region renders the protein partly chaperone-independent, the chaperones may be needed indirectly to relieve occlusion of the RNA-binding site by this domain. Inhibited by several reverse-transcriptase inhibitors: Lamivudine, Adefovir and Entecavir. Its function is as follows. Multifunctional enzyme that converts the viral RNA genome into dsDNA in viral cytoplasmic capsids. This enzyme displays a DNA polymerase activity that can copy either DNA or RNA templates, and a ribonuclease H (RNase H) activity that cleaves the RNA strand of RNA-DNA heteroduplexes in a partially processive 3'- to 5'-endonucleasic mode. Neo-synthesized pregenomic RNA (pgRNA) are encapsidated together with the P protein, and reverse-transcribed inside the nucleocapsid. Initiation of reverse-transcription occurs first by binding the epsilon loop on the pgRNA genome, and is initiated by protein priming, thereby the 5'-end of (-)DNA is covalently linked to P protein. Partial (+)DNA is synthesized from the (-)DNA template and generates the relaxed circular DNA (RC-DNA) genome. After budding and infection, the RC-DNA migrates in the nucleus, and is converted into a plasmid-like covalently closed circular DNA (cccDNA). The activity of P protein does not seem to be necessary for cccDNA generation, and is presumably released from (+)DNA by host nuclear DNA repair machinery. This is Protein P from Homo sapiens (Human).